The primary structure comprises 282 residues: MSRQAATALSTGTSKCPPSQRVPALTDTTASNNDLASLFECPVCFDYVLPPILQCQSGHLVCSNCRPKLTCCPTCRGPLGSIRNLAVEKVANSVLFPCKYSASGCEITLPHTKKAEHEELCEFRPYSCPCPGASCKWQGSLDAVMPHLMHQHKSITTLQGEDIVFLATDINLPGAVDWVMMQSCFGFHFMLVLEKQEKYDGHQQFFAIVQLIGTRKQAENFAYRLELNGHRRRLTWEATPRSIHEGIATAIMNSDCLVFDTSIAQLFAENGNLGINVTISMC.

A compositionally biased stretch (polar residues) spans 1–17; it reads MSRQAATALSTGTSKCP. Positions 1-23 are disordered; that stretch reads MSRQAATALSTGTSKCPPSQRVP. Ser19 bears the Phosphoserine; by ATM and ATR mark. Residues 41 to 76 form an RING-type zinc finger; that stretch reads CPVCFDYVLPPILQCQSGHLVCSNCRPKLTCCPTCR. The tract at residues 90–282 is SBD; sequence VANSVLFPCK…LGINVTISMC (193 aa). The segment at 93–153 adopts an SIAH-type zinc-finger fold; the sequence is SVLFPCKYSA…VMPHLMHQHK (61 aa). Positions 98, 105, 117, 121, 128, 135, 147, and 152 each coordinate Zn(2+).

Belongs to the SINA (Seven in absentia) family. Homodimer. Post-translationally, phosphorylated on Ser-19 by ATM and ATR. In terms of tissue distribution, widely expressed at low level in embryos and adults. Due to the high similarity between SIAH1A and SIAH1B, it is difficult to distinguish its own tissue specificity. Overexpressed in endothelial cells of adult lung.

It localises to the cytoplasm. The protein localises to the nucleus. The enzyme catalyses S-ubiquitinyl-[E2 ubiquitin-conjugating enzyme]-L-cysteine + [acceptor protein]-L-lysine = [E2 ubiquitin-conjugating enzyme]-L-cysteine + N(6)-ubiquitinyl-[acceptor protein]-L-lysine.. Its pathway is protein modification; protein ubiquitination. E3 ubiquitin-protein ligase that mediates ubiquitination and subsequent proteasomal degradation of target proteins. E3 ubiquitin ligases accept ubiquitin from an E2 ubiquitin-conjugating enzyme in the form of a thioester and then directly transfers the ubiquitin to targeted substrates. Mediates E3 ubiquitin ligase activity either through direct binding to substrates or by functioning as the essential RING domain subunit of larger E3 complexes. In Mus musculus (Mouse), this protein is E3 ubiquitin-protein ligase SIAH1B (Siah1b).